The following is a 1099-amino-acid chain: SLIT-ROBO Rho GTPase-activating protein 3 (1099 aa).

Residues 19-314 (AQIKEIRTQL…AVDNLDSRSD (296 aa)) form the F-BAR domain. Residues 205 to 225 (HEDRPQRRSSVKKIEKMKEKR) are disordered. Positions 352–392 (QTELLMRYHQLQSRLATLKIENEEVRKTLDATMQTLQDMLT) form a coiled coil. The segment at 471-493 (ERAECGTTRPPCLPPKPQKMRRP) is disordered. The 189-residue stretch at 506-694 (GSMEAFIKDS…TIIIHHEAIF (189 aa)) folds into the Rho-GAP domain. In terms of domain architecture, SH3 spans 744-803 (VEQIEAIAKFDYMGRSPRELSFKKGASLLLYHRASEDWWEGRHNGVDGLIPHQYIVVQDM). Positions 809-820 (DSLSQKADSEAS) are enriched in polar residues. A disordered region spans residues 809–847 (DSLSQKADSEASSGPLLDDKASSKNDLQSPTEHISDYGF). Phosphoserine is present on residues Ser-817, Ser-820, Ser-821, Ser-837, and Ser-858. Disordered stretches follow at residues 861–911 (AAIP…SPEK) and 926–950 (PDKKALSEGHSMRSTCGSTRHSSLG). Residues 926-936 (PDKKALSEGHS) show a composition bias toward basic and acidic residues. The segment covering 937–947 (MRSTCGSTRHS) has biased composition (polar residues). Positions 952–987 (HKSLEAEALAEDIEKTMSTALHELRELERQNTVKQA) form a coiled coil. A Phosphoserine modification is found at Ser-954. The disordered stretch occupies residues 995-1099 (LEPLKNPPGP…NSSADKSGTM (105 aa)). Composition is skewed to low complexity over residues 1026 to 1038 (RRSSSSSTEMMTT) and 1060 to 1074 (VRPVVQHRSSSSSSS). Residues 1089 to 1099 (PNSSADKSGTM) are compositionally biased toward polar residues.

Homodimer. Forms a heterooligomer with SRGAP1 and SRGAP2 through its F-BAR domain. Interacts with WASF1. Probably interacts with ROBO1. Interacts with FASLG. Highly expressed in adult and fetal brain. Expressed at low levels in kidney. Isoform 3 is expressed in the kidney but is absent in the brain.

In terms of biological role, GTPase-activating protein for RAC1 and perhaps Cdc42, but not for RhoA small GTPase. May attenuate RAC1 signaling in neurons. The chain is SLIT-ROBO Rho GTPase-activating protein 3 (SRGAP3) from Homo sapiens (Human).